Consider the following 660-residue polypeptide: Acetyl-coenzyme A synthetase (660 aa).

CoA-binding positions include 197–200 (RGGK) and Thr317. ATP contacts are provided by residues 397-399 (GEP), 421-426 (DTWWQT), Asp512, and Arg528. Position 536 (Ser536) interacts with CoA. Arg539 is a binding site for ATP. 3 residues coordinate Mg(2+): Val550, His552, and Val555. Lys625 is subject to N6-acetyllysine.

Belongs to the ATP-dependent AMP-binding enzyme family. It depends on Mg(2+) as a cofactor. In terms of processing, acetylated. Deacetylation by the SIR2-homolog deacetylase activates the enzyme.

The enzyme catalyses acetate + ATP + CoA = acetyl-CoA + AMP + diphosphate. Its function is as follows. Catalyzes the conversion of acetate into acetyl-CoA (AcCoA), an essential intermediate at the junction of anabolic and catabolic pathways. AcsA undergoes a two-step reaction. In the first half reaction, AcsA combines acetate with ATP to form acetyl-adenylate (AcAMP) intermediate. In the second half reaction, it can then transfer the acetyl group from AcAMP to the sulfhydryl group of CoA, forming the product AcCoA. The protein is Acetyl-coenzyme A synthetase of Burkholderia thailandensis (strain ATCC 700388 / DSM 13276 / CCUG 48851 / CIP 106301 / E264).